The primary structure comprises 162 residues: Protein A49R (162 aa).

The protein belongs to the poxviridae A49 protein family. Interacts with host BTRC; this interaction inhibits NF-kappa-B activation.

Its subcellular location is the host cytoplasm. The protein resides in the host nucleus. Functionally, plays a role in the inhibition of host NF-kappa-B activation. Interacts with host BTRC and thereby diminishes ubiquitination of NF-kappa-B inhibitor alpha/NFKBIA. This stabilizes NFKBIA and its interaction with NF-kappaB, so retaining p65/RELA in the cytoplasm and preventing NF-kappa-B-dependent gene expression. The protein is Protein A49R of Bos taurus (Bovine).